The following is a 453-amino-acid chain: Tubulin alpha chain (453 aa).

Gln-11 contacts GTP. N6-acetyllysine is present on Lys-40. GTP is bound by residues Glu-71, Gly-144, Thr-145, Thr-179, Asn-206, and Asn-228. Mg(2+) is bound at residue Glu-71. Residue Glu-254 is part of the active site.

Belongs to the tubulin family. As to quaternary structure, dimer of alpha and beta chains. A typical microtubule is a hollow water-filled tube with an outer diameter of 25 nm and an inner diameter of 15 nM. Alpha-beta heterodimers associate head-to-tail to form protofilaments running lengthwise along the microtubule wall with the beta-tubulin subunit facing the microtubule plus end conferring a structural polarity. Microtubules usually have 13 protofilaments but different protofilament numbers can be found in some organisms and specialized cells. Mg(2+) is required as a cofactor. Post-translationally, undergoes a tyrosination/detyrosination cycle, the cyclic removal and re-addition of a C-terminal tyrosine residue by the enzymes tubulin tyrosine carboxypeptidase (TTCP) and tubulin tyrosine ligase (TTL), respectively. Acetylation of alpha chains at Lys-40 stabilizes microtubules and affects affinity and processivity of microtubule motors. This modification has a role in multiple cellular functions, ranging from cell motility, cell cycle progression or cell differentiation to intracellular trafficking and signaling.

The protein resides in the cytoplasm. It localises to the cytoskeleton. The catalysed reaction is GTP + H2O = GDP + phosphate + H(+). Tubulin is the major constituent of microtubules, a cylinder consisting of laterally associated linear protofilaments composed of alpha- and beta-tubulin heterodimers. Microtubules grow by the addition of GTP-tubulin dimers to the microtubule end, where a stabilizing cap forms. Below the cap, tubulin dimers are in GDP-bound state, owing to GTPase activity of alpha-tubulin. This is Tubulin alpha chain (TUBA) from Neospora caninum (Coccidian parasite).